The chain runs to 545 residues: GPI transamidase component PIG-T homolog (545 aa).

The N-terminal stretch at 1 to 22 (MKKNGCLLLFAYSLLSFSLTAA) is a signal peptide. Topologically, residues 23–493 (TIDETYDESL…PTPDFSMPYN (471 aa)) are lumenal. Asn-168, Asn-227, Asn-336, Asn-391, and Asn-467 each carry an N-linked (GlcNAc...) asparagine glycan. A helical membrane pass occupies residues 494–514 (VIIFTSTVIALTFGGIFNLLT). The Cytoplasmic segment spans residues 515-545 (RRFVPQQSKFQNRQPSMLQRLKEKIFHKKRG).

Belongs to the PIGT family. As to quaternary structure, forms a complex with PIG-S homolog, PIG-U homolog and GPI8. In terms of processing, the disulfide bond between PIGK/GPI8 and PIGT is important for normal enzyme activity.

The protein resides in the endoplasmic reticulum membrane. It functions in the pathway glycolipid biosynthesis; glycosylphosphatidylinositol-anchor biosynthesis. In terms of biological role, component of the GPI transamidase complex. Involved in transfer of GPI to proteins. In Schizosaccharomyces pombe (strain 972 / ATCC 24843) (Fission yeast), this protein is GPI transamidase component PIG-T homolog (gpi16).